Consider the following 250-residue polypeptide: Cytochrome c oxidase subunit 2 (250 aa).

At 1 to 27 (MGLLFNNLIMNFDAPSPWGIYFQDSAT) the chain is on the mitochondrial intermembrane side. Residues 28–61 (PQMEGLVELHDNIMYYLVVILFGVGWILLSIIRN) traverse the membrane as a helical segment. The Mitochondrial matrix segment spans residues 62 to 77 (YISTKSPISHKYLNHG). Residues 78–107 (TLIELIWTITPAVILILIAFPSFKLLYLMD) traverse the membrane as a helical segment. Residues 108–250 (EVSDPSMSVL…EKFLTWLEEQ (143 aa)) lie on the Mitochondrial intermembrane side of the membrane. Positions 185, 220, 222, 224, 228, and 231 each coordinate Cu cation. Residue glutamate 222 participates in Mg(2+) binding.

This sequence belongs to the cytochrome c oxidase subunit 2 family. As to quaternary structure, component of the cytochrome c oxidase (complex IV, CIV), a multisubunit enzyme composed of 11 subunits. The complex is composed of a catalytic core of 3 subunits Cox1, Cox2 and Cox3, encoded in the mitochondrial DNA, and 8 supernumerary subunits Cox4, Cox5a/Cox5, Cox6, Cox7, Cox8, Cox7a/Cox9, Cox6b/Cox12 and Cox6a/Cox13, which are encoded in the nuclear genome. The complex exists as a monomer or a dimer and forms respiratory supercomplexes (SCs) in the inner mitochondrial membrane with NADH-ubiquinone oxidoreductase (complex I, CI) and ubiquinol-cytochrome c oxidoreductase (cytochrome b-c1 complex, complex III, CIII), resulting in various different assemblies (supercomplexes I(1)IV(1), I(1)III(3)IV(2), III(2)IV(1) and III(2)IV(2) as well as larger supercomplexes of compositions like I(1)III(2)IV(5-6)). Requires Cu cation as cofactor.

It localises to the mitochondrion inner membrane. The catalysed reaction is 4 Fe(II)-[cytochrome c] + O2 + 8 H(+)(in) = 4 Fe(III)-[cytochrome c] + 2 H2O + 4 H(+)(out). Its function is as follows. Component of the cytochrome c oxidase, the last enzyme in the mitochondrial electron transport chain which drives oxidative phosphorylation. The respiratory chain contains 3 multisubunit complexes succinate dehydrogenase (complex II, CII), ubiquinol-cytochrome c oxidoreductase (cytochrome b-c1 complex, complex III, CIII) and cytochrome c oxidase (complex IV, CIV), that cooperate to transfer electrons derived from NADH and succinate to molecular oxygen, creating an electrochemical gradient over the inner membrane that drives transmembrane transport and the ATP synthase. Cytochrome c oxidase is the component of the respiratory chain that catalyzes the reduction of oxygen to water. Electrons originating from reduced cytochrome c in the intermembrane space (IMS) are transferred via the dinuclear copper A center (CU(A)) of Cox2 and heme A of Cox1 to the active site in Cox1, a binuclear center (BNC) formed by heme A3 and copper B (CU(B)). The BNC reduces molecular oxygen to 2 water molecules using 4 electrons from cytochrome c in the IMS and 4 protons from the mitochondrial matrix. This Neurospora crassa (strain ATCC 24698 / 74-OR23-1A / CBS 708.71 / DSM 1257 / FGSC 987) protein is Cytochrome c oxidase subunit 2 (cox-2).